Reading from the N-terminus, the 214-residue chain is Adenylate kinase (214 aa).

10–15 (GAGKGT) contributes to the ATP binding site. Positions 30 to 59 (STGDMLRAAIKAGTELGKQAKAVIDAGQLV) are NMP. AMP-binding positions include Thr31, Arg36, 57 to 59 (QLV), 85 to 88 (GFPR), and Gln92. The segment at 122-159 (GRRAHLPSGRTYHVVYNPPKVEGKDDVTGEDLVVRDDD) is LID. ATP contacts are provided by residues Arg123 and 132 to 133 (TY). Residues Arg156 and Arg167 each contribute to the AMP site. Residue Lys200 participates in ATP binding.

This sequence belongs to the adenylate kinase family. Monomer.

The protein resides in the cytoplasm. The catalysed reaction is AMP + ATP = 2 ADP. It functions in the pathway purine metabolism; AMP biosynthesis via salvage pathway; AMP from ADP: step 1/1. Catalyzes the reversible transfer of the terminal phosphate group between ATP and AMP. Plays an important role in cellular energy homeostasis and in adenine nucleotide metabolism. In Vibrio vulnificus (strain YJ016), this protein is Adenylate kinase.